We begin with the raw amino-acid sequence, 96 residues long: Aspartyl/glutamyl-tRNA(Asn/Gln) amidotransferase subunit C (96 aa).

It belongs to the GatC family. As to quaternary structure, heterotrimer of A, B and C subunits.

It catalyses the reaction L-glutamyl-tRNA(Gln) + L-glutamine + ATP + H2O = L-glutaminyl-tRNA(Gln) + L-glutamate + ADP + phosphate + H(+). The enzyme catalyses L-aspartyl-tRNA(Asn) + L-glutamine + ATP + H2O = L-asparaginyl-tRNA(Asn) + L-glutamate + ADP + phosphate + 2 H(+). Functionally, allows the formation of correctly charged Asn-tRNA(Asn) or Gln-tRNA(Gln) through the transamidation of misacylated Asp-tRNA(Asn) or Glu-tRNA(Gln) in organisms which lack either or both of asparaginyl-tRNA or glutaminyl-tRNA synthetases. The reaction takes place in the presence of glutamine and ATP through an activated phospho-Asp-tRNA(Asn) or phospho-Glu-tRNA(Gln). This chain is Aspartyl/glutamyl-tRNA(Asn/Gln) amidotransferase subunit C, found in Exiguobacterium sibiricum (strain DSM 17290 / CCUG 55495 / CIP 109462 / JCM 13490 / 255-15).